The following is a 492-amino-acid chain: MTRVGQRDSPAKEEAPPATKKRFLTPGRFVTILCIINLINYVDRGVIASNGVNGSSKVCDAKGVCSAGTGIQGEFNLTNFEDGLLSSAFMVGLLVASPIFAGLSKRFNPFKLIGVGLTVWTIAVIGCGFSYNFWMIAVFRMFVGVGEASFISLAAPYIDDSAPVARKNFWLGLFYMCIPAGVALGYVFGGYIGNHLGWRWAFYIEAIAMAVFVILSFCIKPPQQLKGFADKDSKKPSTSIETVAPTDAEASQIKTKTPKSKNLVVLFGKDLKALFSEKVFIVNVLGYITYNFVIGAYSYWGPKAGFGIYKMKNADMIFGGLTIICGIIGTLGGSYVLDRINATLSNTFKLLAASTLLGAAFCFTAFLMKNMYAFIALFAVGEILIFAPQAPVNFVCLHCVRPNLRPLSMASSTVLIHILGDVPSSPLYGKMQDHLKNWRKSTLIITSILFLAAIIWGIGIFMNSVDRSNEVSEDDEVEEDKLESKTENSTLA.

A helical transmembrane segment spans residues 29 to 49 (FVTILCIINLINYVDRGVIAS). 2 N-linked (GlcNAc...) asparagine glycosylation sites follow: Asn-53 and Asn-76. 7 consecutive transmembrane segments (helical) span residues 83–103 (GLLS…FAGL), 119–139 (VWTI…IAVF), 141–161 (MFVG…IDDS), 169–189 (FWLG…YVFG), 200–220 (WAFY…FCIK), 279–299 (VFIV…AYSY), and 317–337 (IFGG…SYVL). An N-linked (GlcNAc...) asparagine glycan is attached at Asn-341. The next 4 helical transmembrane spans lie at 348–368 (FKLL…AFLM), 372–392 (YAFI…QAPV), 407–427 (LSMA…SSPL), and 442–462 (TLII…GIFM). Ser-472 bears the Phosphoserine mark. The span at 472-481 (SEDDEVEEDK) shows a compositional bias: acidic residues. The segment at 472–492 (SEDDEVEEDKLESKTENSTLA) is disordered. An N-linked (GlcNAc...) asparagine glycan is attached at Asn-488.

Belongs to the major facilitator superfamily. Spinster (TC 2.A.1.49) family.

It is found in the late endosome membrane. The protein resides in the lysosome membrane. Functionally, probable sphingolipid transporter that plays a central role in endosomes and/or lysosomes storage. This Arabidopsis thaliana (Mouse-ear cress) protein is Probable sphingolipid transporter spinster homolog 1.